Consider the following 160-residue polypeptide: Baculoviral IAP repeat-containing protein 5.1 (160 aa).

A BIR repeat occupies 27–97 (RLATFADWPF…KRSASCGFLS (71 aa)). Position 43 is a phosphothreonine; by CDK1 (threonine 43). The Zn(2+) site is built by cysteine 66, cysteine 69, histidine 86, and cysteine 93.

Belongs to the IAP family. As to quaternary structure, component of the CPC at least composed of survivin/birc5, incenp, cdca8/borealin and/or cdca9/dasra-A, and aurkb/aurora-B. Interacts directly with incenp (via N-terminus), and may weakly interact with aurkb (via N-terminus) to stabilize the complex. Interacts with GTP-bound ran in both the S and M phases of the cell cycle. Also found in a complex with ubiquitin-mediated signaling proteins including at least usp9x/xFAM, nploc4/npl4 and ufd1. Post-translationally, ubiquitination is required for centrosome-targeting.

The protein localises to the cytoplasm. The protein resides in the nucleus. It is found in the chromosome. Its subcellular location is the centromere. It localises to the cytoskeleton. The protein localises to the spindle. Functionally, component of the chromosomal passenger complex (CPC), a complex that acts as a key regulator of mitosis. The CPC complex has essential functions at the centromere in ensuring correct chromosome alignment and segregation and is required for chromatin-induced microtubule stabilization and spindle assembly. Stimulates the mitotic kinase activity of aurkb/aurora-B in the CPC. Does not appear to exhibit anti-apoptotic activity. The polypeptide is Baculoviral IAP repeat-containing protein 5.1 (birc5.1) (Xenopus tropicalis (Western clawed frog)).